The chain runs to 248 residues: UPF0246 protein FN1762 (248 aa).

Belongs to the UPF0246 family.

The sequence is that of UPF0246 protein FN1762 from Fusobacterium nucleatum subsp. nucleatum (strain ATCC 25586 / DSM 15643 / BCRC 10681 / CIP 101130 / JCM 8532 / KCTC 2640 / LMG 13131 / VPI 4355).